An 872-amino-acid polypeptide reads, in one-letter code: DNA mismatch repair protein MutS (872 aa).

Residue 602 to 609 (GPNMSGKS) participates in ATP binding.

The protein belongs to the DNA mismatch repair MutS family.

Functionally, this protein is involved in the repair of mismatches in DNA. It is possible that it carries out the mismatch recognition step. This protein has a weak ATPase activity. The chain is DNA mismatch repair protein MutS from Staphylococcus aureus (strain Mu3 / ATCC 700698).